The chain runs to 504 residues: Taurochenodeoxycholic 6 alpha-hydroxylase (504 aa).

2 consecutive transmembrane segments (helical) span residues 6–26 (LASV…LLLL) and 110–130 (APVL…LLNG). Position 451 (cysteine 451) interacts with heme.

Belongs to the cytochrome P450 family. It depends on heme as a cofactor. Primarily expressed in liver. Low expression in kidney.

It is found in the endoplasmic reticulum membrane. The catalysed reaction is taurochenodeoxycholate + reduced [NADPH--hemoprotein reductase] + O2 = taurohyocholate + oxidized [NADPH--hemoprotein reductase] + H2O + H(+). It carries out the reaction lithocholate + reduced [NADPH--hemoprotein reductase] + O2 = hyodeoxycholate + oxidized [NADPH--hemoprotein reductase] + H2O + H(+). Functionally, catalyzes the 6 alpha hydroxylation oxidation of taurodeoxycholate to produce the pig specific bile acid taurohyocholic acid. The chain is Taurochenodeoxycholic 6 alpha-hydroxylase (CYP4A21) from Sus scrofa (Pig).